Here is a 674-residue protein sequence, read N- to C-terminus: Methionine--tRNA ligase (674 aa).

The short motif at 11–21 is the 'HIGH' region element; sequence PYANGDLHLGH. Residues C142, C145, C155, and C158 each contribute to the Zn(2+) site. Residues 330 to 334 carry the 'KMSKS' region motif; that stretch reads KMSKS. K333 is a binding site for ATP. Positions 574 to 674 constitute a tRNA-binding domain; sequence DFMKVDLRIA…EGAQPGMRVK (101 aa).

It belongs to the class-I aminoacyl-tRNA synthetase family. MetG type 1 subfamily. In terms of assembly, homodimer. The cofactor is Zn(2+).

The protein localises to the cytoplasm. The enzyme catalyses tRNA(Met) + L-methionine + ATP = L-methionyl-tRNA(Met) + AMP + diphosphate. Functionally, is required not only for elongation of protein synthesis but also for the initiation of all mRNA translation through initiator tRNA(fMet) aminoacylation. This chain is Methionine--tRNA ligase, found in Francisella tularensis subsp. holarctica (strain OSU18).